We begin with the raw amino-acid sequence, 1669 residues long: MGPRLSVWLLLLFAALLLHEERSRAAAKGDCGGSGCGKCDCHGVKGQKGERGLPGLQGVIGFPGMQGPEGPHGPPGQKGDAGEPGLPGTKGTRGPPGAAGYPGNPGLPGIPGQDGPPGPPGIPGCNGTKGERGPLGPPGLPGFSGNPGPPGLPGMKGDPGEILGHVPGTLLKGERGFPGIPGMPGSPGLPGLQGPVGPPGFTGPPGPPGPPGPPGEKGQMGSSFQGPKGDKGEQGVSGPPGVPGQAQVKEKGDFAPTGEKGQKGEPGFPGVPGYGEKGEPGKQGPRGKPGKDGEKGERGSPGIPGDSGYPGLPGRQGPQGEKGEAGLPGPPGTVIGTMPLGEKGDRGYPGAPGLRGEPGPKGFPGTPGQPGPPGFPTPGQAGAPGFPGERGEKGDQGFPGVSLPGPSGRDGAPGPPGPPGPPGQPGHTNGIVECQPGPPGDQGPPGTPGQPGLTGEVGQKGQKGESCLACDTEGLRGPPGPQGPPGEIGFPGQPGAKGDRGLPGRDGLEGLPGPQGSPGLIGQPGAKGEPGEIFFDMRLKGDKGDPGFPGQPGMPGRAGTPGRDGHPGLPGPKGSPGSIGLKGERGPPGGVGFPGSRGDIGPPGPPGVGPIGPVGEKGQAGFPGGPGSPGLPGPKGEAGKVVPLPGPPGAAGLPGSPGFPGPQGDRGFPGTPGRPGIPGEKGAVGQPGIGFPGLPGPKGVDGLPGEIGRPGSPGRPGFNGLPGNPGPQGQKGEPGIGLPGLKGQPGLPGIPGTPGEKGSIGGPGVPGEQGLTGPPGLQGIRGDPGPPGVQGPAGPPGVPGIGPPGAMGPPGGQGPPGSSGPPGIKGEKGFPGFPGLDMPGPKGDKGSQGLPGLTGQSGLPGLPGQQGTPGVPGFPGSKGEMGVMGTPGQPGSPGPAGTPGLPGEKGDHGLPGSSGPRGDPGFKGDKGDVGLPGMPGSMEHVDMGSMKGQKGDQGEKGQIGPTGDKGSRGDPGTPGVPGKDGQAGHPGQPGPKGDPGLSGTPGSPGLPGPKGSVGGMGLPGSPGEKGVPGIPGSQGVPGSPGEKGAKGEKGQSGLPGIGIPGRPGDKGDQGLAGFPGSPGEKGEKGSAGTPGMPGSPGPRGSPGNIGHPGSPGLPGEKGDKGLPGLDGVPGVKGEAGLPGTPGPTGPAGQKGEPGSDGIPGSAGEKGEQGVPGRGFPGFPGSKGDKGSKGEVGFPGLAGSPGIPGVKGEQGFMGPPGPQGQPGLPGTPGHPVEGPKGDRGPQGQPGLPGHPGPMGPPGFPGINGPKGDKGNQGWPGAPGVPGPKGDPGFQGMPGIGGSPGITGSKGDMGLPGVPGFQGQKGLPGLQGVKGDQGDQGVPGPKGLQGPPGPPGPYDVIKGEPGLPGPEGPPGLKGLQGPPGPKGQQGVTGSVGLPGPPGVPGFDGAPGQKGETGPFGPPGPRGFPGPPGPDGLPGSMGPPGTPSVDHGFLVTRHSQTTDDPLCPPGTKILYHGYSLLYVQGNERAHGQDLGTAGSCLRKFSTMPFLFCNINNVCNFASRNDYSYWLSTPEPMPMSMAPISGDNIRPFISRCAVCEAPAMVMAVHSQTIQIPQCPNGWSSLWIGYSFVMHTSAGAEGSGQALASPGSCLEEFRSAPFIECHGRGTCNYYANAYSFWLATIERSEMFKKPTPSTLKAGELRTHVSRCQVCMRRT.

Residues 1-27 form the signal peptide; sequence MGPRLSVWLLLLFAALLLHEERSRAAA. Residues 28 to 172 constitute a propeptide, N-terminal propeptide (7S domain); it reads KGDCGGSGCG…LGHVPGTLLK (145 aa). The disordered stretch occupies residues 47 to 1443; the sequence is QKGERGLPGL…MGPPGTPSVD (1397 aa). Low complexity predominate over residues 92–104; it reads TRGPPGAAGYPGN. Asn126 carries N-linked (GlcNAc...) asparagine glycosylation. Positions 173-1440 are triple-helical region; sequence GERGFPGIPG…PGSMGPPGTP (1268 aa). Residues 196–214 show a composition bias toward pro residues; it reads VGPPGFTGPPGPPGPPGPP. A 3-hydroxyproline mark is found at Pro204, Pro207, and Pro210. The span at 234–247 shows a compositional bias: low complexity; that stretch reads QGVSGPPGVPGQAQ. Basic and acidic residues predominate over residues 289 to 298; sequence PGKDGEKGER. The segment covering 367–376 has biased composition (pro residues); it reads PGQPGPPGFP. A compositionally biased stretch (low complexity) spans 377–387; sequence TPGQAGAPGFP. 2 stretches are compositionally biased toward pro residues: residues 413–424 and 436–448; these read PGPPGPPGPPGQ and PGPP…PGTP. Residues 485 to 494 show a composition bias toward low complexity; sequence PGEIGFPGQP. Basic and acidic residues-rich tracts occupy residues 497–508 and 535–545; these read KGDRGLPGRDGL and FDMRLKGDKGD. The span at 586–595 shows a compositional bias: gly residues; the sequence is GPPGGVGFPG. Pro587 and Pro602 each carry 3-hydroxyproline. Pro603 carries the 4-hydroxyproline modification. Residue Pro605 is modified to 3-hydroxyproline. Residue Pro606 is modified to 4-hydroxyproline. Over residues 611–620 the composition is skewed to low complexity; the sequence is IGPVGEKGQA. Gly residues predominate over residues 621–630; it reads GFPGGPGSPG. 4-hydroxyproline is present on residues Pro623, Pro626, Pro629, and Pro632. Pro647 carries the 3-hydroxyproline modification. The span at 715 to 731 shows a compositional bias: low complexity; sequence RPGFNGLPGNPGPQGQK. Over residues 758–767 the composition is skewed to gly residues; it reads GSIGGPGVPG. The segment covering 784-802 has biased composition (pro residues); sequence PGPPGVQGPAGPPGVPGIG. Residues 803 to 817 show a composition bias toward gly residues; sequence PPGAMGPPGGQGPPG. 2 stretches are compositionally biased toward low complexity: residues 847–875 and 994–1003; these read SQGL…PGFP and DPGLSGTPGS. Residues 1011 to 1020 show a composition bias toward gly residues; it reads GSVGGMGLPG. At Pro1214 the chain carries 3-hydroxyproline. The segment covering 1220 to 1230 has biased composition (low complexity); sequence QPGLPGTPGHP. Over residues 1247–1258 the composition is skewed to pro residues; it reads PGHPGPMGPPGF. Over residues 1290 to 1299 the composition is skewed to gly residues; sequence GMPGIGGSPG. 3 stretches are compositionally biased toward low complexity: residues 1333-1343, 1368-1391, and 1398-1412; these read DQGVPGPKGLQ, PGLK…SVGL, and PGFD…ETGP. Residues 1413–1428 show a composition bias toward pro residues; sequence FGPPGPRGFPGPPGPD. Pro1424 carries the post-translational modification 3-hydroxyproline. A Collagen IV NC1 domain is found at 1445-1669; sequence GFLVTRHSQT…SRCQVCMRRT (225 aa). 6 cysteine pairs are disulfide-bonded: Cys1460–Cys1551, Cys1493–Cys1548, Cys1505–Cys1511, Cys1570–Cys1665, Cys1604–Cys1662, and Cys1616–Cys1622. Met1533 is covalently cross-linked (S-Lysyl-methionine sulfilimine (Met-Lys) (interchain with K-1651)). An S-Lysyl-methionine sulfilimine (Lys-Met) (interchain with M-1533) cross-link involves residue Lys1651.

The protein belongs to the type IV collagen family. There are six type IV collagen isoforms, alpha 1(IV)-alpha 6(IV), each of which can form a triple helix structure with 2 other chains to generate type IV collagen network. Interacts with EFEMP2. In terms of processing, lysines at the third position of the tripeptide repeating unit (G-X-Y) are hydroxylated. The modified lysines can be O-glycosylated. Contains 4-hydroxyproline. Prolines at the third position of the tripeptide repeating unit (G-X-Y) are hydroxylated in some or all of the chains. Post-translationally, contains 3-hydroxyproline. This modification occurs on the first proline residue in the sequence motif Gly-Pro-Hyp, where Hyp is 4-hydroxyproline. In terms of processing, type IV collagens contain numerous cysteine residues which are involved in inter- and intramolecular disulfide bonding. 12 of these, located in the NC1 domain, are conserved in all known type IV collagens. The trimeric structure of the NC1 domains is stabilized by covalent bonds (sulfilimine cross-links) between Lys and Met residues. These cross-links are important for the mechanical stability of the basement membrane. Sulfilimine cross-link is catalyzed by PXDN. Post-translationally, proteolytic processing produces the C-terminal NC1 peptide, arresten. As to expression, detected in the basement membrane of the cornea (at protein level).

It is found in the secreted. The protein resides in the extracellular space. Its subcellular location is the extracellular matrix. The protein localises to the basement membrane. Functionally, type IV collagen is the major structural component of glomerular basement membranes (GBM), forming a 'chicken-wire' meshwork together with laminins, proteoglycans and entactin/nidogen. In terms of biological role, arresten, comprising the C-terminal NC1 domain, inhibits angiogenesis and tumor formation. The C-terminal half is found to possess the anti-angiogenic activity. Specifically inhibits endothelial cell proliferation, migration and tube formation. The chain is Collagen alpha-1(IV) chain from Mus musculus (Mouse).